Here is a 141-residue protein sequence, read N- to C-terminus: Decarboxylase CPUR_05434 (141 aa).

One can recognise an EthD domain in the interval 26–121 (EGMSEEAYRN…MHDHEMFADT (96 aa)).

The protein belongs to the tpcK family.

The catalysed reaction is atrochrysone carboxylate + H(+) = atrochrysone + CO2. Decarboxylase; part of the ergochrome gene cluster responsible for the typical purple-black color of the ergot sclerotia. The ergochrome gene cluster produces several ergot pigments including the yellow ergochrome secalonic acid and its derivatives, as well as the red anthraquinones endocrocin and clavorubin. The pathway begins with the synthesis of atrochrysone thioester by the polyketide synthase (PKS) CPUR_05437. The atrochrysone carboxyl ACP thioesterase CPUR_05436 then breaks the thioester bond and releases the atrochrysone carboxylic acid from CPUR_05437. The decarboxylase CPUR_05434 then catalyzes the concerted decarboxylation-elimination required to convert atochrysone carboxylic acid into emodin anthrone, which is further oxidized to emodin by the anthrone oxygenase CPUR_05435. Emodin is further modified to yield monodictyphenone via several steps involving CPUR_05427, CPUR_05428, CPUR_05429 and CPUR_05430. The short chain dehydrogenase/reductase CPUR_05418 then catalyzes the C-5 ketoreduction to give the xanthone skeleton of the monomeric units. Ergochromes formation requires further dimerization steps of different xanthone units, probably catalyzed by the cytochrome P450 monooxygenase CPUR_05419. CPUR_05425, CPUR_05426 and CPUR_05431 are unique to Claviceps, thus it is likely that they are involved in further modification of xanthone units or in their dimerization. The yellow ergochromes and the red anthraquinone pigments endocrocin and clavorubin are products from the same PKS derived precursors and the latter are likely shunt products in the pathway of xanthone biosynthesis. It is proposed that atrochrysone carboxylic acid released from the PKS CPUR_05437 can also be converted to endocrocin anthrone which is further oxidized into endocrocin by CPUR_05435. Endocrocin could be then modified to clavorubin, possibly by CPUR_05423 and CPUR_05431. Clavorubin is the principal anthraquinone metabolite produced by the cluster with a much higher yield compared to endocrocin. This is Decarboxylase CPUR_05434 from Claviceps purpurea (strain 20.1) (Ergot fungus).